Reading from the N-terminus, the 1032-residue chain is MYEEIRMKFTDIFIRRPVLAVSISLLMIILGLQAISKLAVREYPKMTTTVITVSTAYPGADANLIQAFVTSKLEESIAQADNIDYMSSTSAPSSSTITIKMKLNTDPAGALADVLAKVNAVKSALPNGIEDPSVSSSSGGSGIMYISFRSKKLDSSQVTDYINRVVKPQFFTIEGVAEVQVFGAAEYALRIWLDPQKMAAQNLSVPTVMSALSANNVQTAAGNDNGYYVSYRNKVETTTKSVEQLSNLIISSNGDDLVRLRDIATVELNKENDNSRATANGAESVVLAINPTSTANPLTVAEKIRPLYESIKTQLPDSMESDILYDRTIAINSSIHEVIKTIGEATLIVLVVILMFIGSFRAILIPILAIPISLIGVLMLLQSFNFSINLMTLLALILAIGLVVDDAIVVLENIDRHIKAGETPFRAAIIGTREIAVPVISMTIALIAVYSPMALMGGITGTLFKEFALTLAGAVFISGVVALTLSPMMSSKLLKSNAKPTWMEERVEHTLGKVNRVYEYMLDLVMLNRKSMLAFAVVIFSTLPFLFNSLSSELTPNEDKGAFIAIGNAPSSVNVDYIQNAMQPYMKNVMETPEVSFGMSIAGAPTSNSSLNIITLKDWKERSRKQSAIMNEINEKAKSIPEVSVSAFNIPEIDTGEQGPPVSIVLKTAQDYKSLANTAEKFLSAMKASGKFIYTNLDLTYDTAQMTISVDKEKAGTYGITMQQISNTLGSFLSGATVTRVDVDGRAYKVISQVKRDDRLSPESFQNYYLTASNGQSVPLSSVISMKLETQPTSLPRFSQLNSAEISAVPMPGISSGDAIAWLQQQATDNLPQGYTFDFKSEARQLVQEGNALAVTFALAVIIIFLVLAIQFESIRDPMVIMISVPLAVSGALVSLNILSFFSIAGTTLNIYSQVGLITLVGLITKHGILMCEVAKEEQLNHGKTRIEAITHAAKVRLRPILMTTAAMVAGLIPLLYATGAGAVSRFSIGIVIVAGLSIGTIFTLFVLPVVYSYVATEHKPLPVFDENKTTH.

Residues 1–17 are Cytoplasmic-facing; that stretch reads MYEEIRMKFTDIFIRRP. A helical transmembrane segment spans residues 18–36; it reads VLAVSISLLMIILGLQAIS. Topologically, residues 37–337 are periplasmic; it reads KLAVREYPKM…TIAINSSIHE (301 aa). Residues 338 to 357 form a helical membrane-spanning segment; sequence VIKTIGEATLIVLVVILMFI. Topologically, residues 358–363 are cytoplasmic; it reads GSFRAI. Residues 364-383 form a helical membrane-spanning segment; the sequence is LIPILAIPISLIGVLMLLQS. The Periplasmic portion of the chain corresponds to 384 to 389; it reads FNFSIN. A helical transmembrane segment spans residues 390-411; the sequence is LMTLLALILAIGLVVDDAIVVL. Over 412–438 the chain is Cytoplasmic; the sequence is ENIDRHIKAGETPFRAAIIGTREIAVP. Residues 439–457 traverse the membrane as a helical segment; sequence VISMTIALIAVYSPMALMG. The Periplasmic portion of the chain corresponds to 458–470; the sequence is GITGTLFKEFALT. The helical transmembrane segment at 471–493 threads the bilayer; sequence LAGAVFISGVVALTLSPMMSSKL. Over 494–529 the chain is Cytoplasmic; the sequence is LKSNAKPTWMEERVEHTLGKVNRVYEYMLDLVMLNR. The chain crosses the membrane as a helical span at residues 530 to 548; it reads KSMLAFAVVIFSTLPFLFN. Residues 549-852 lie on the Periplasmic side of the membrane; it reads SLSSELTPNE…ARQLVQEGNA (304 aa). The chain crosses the membrane as a helical span at residues 853 to 872; sequence LAVTFALAVIIIFLVLAIQF. Topologically, residues 873 to 878 are cytoplasmic; the sequence is ESIRDP. Residues 879–898 traverse the membrane as a helical segment; that stretch reads MVIMISVPLAVSGALVSLNI. Over 899–910 the chain is Periplasmic; that stretch reads LSFFSIAGTTLN. A helical transmembrane segment spans residues 911-932; sequence IYSQVGLITLVGLITKHGILMC. The Cytoplasmic portion of the chain corresponds to 933–960; sequence EVAKEEQLNHGKTRIEAITHAAKVRLRP. The chain crosses the membrane as a helical span at residues 961 to 979; sequence ILMTTAAMVAGLIPLLYAT. At 980–992 the chain is on the periplasmic side; sequence GAGAVSRFSIGIV. A helical transmembrane segment spans residues 993–1015; the sequence is IVAGLSIGTIFTLFVLPVVYSYV. Topologically, residues 1016-1032 are cytoplasmic; the sequence is ATEHKPLPVFDENKTTH.

It belongs to the resistance-nodulation-cell division (RND) (TC 2.A.6) family.

It localises to the cell inner membrane. Functionally, could be a drug efflux pump. This is an uncharacterized protein from Haemophilus influenzae (strain ATCC 51907 / DSM 11121 / KW20 / Rd).